Here is a 165-residue protein sequence, read N- to C-terminus: Endoribonuclease YbeY (165 aa).

Positions 130, 134, and 140 each coordinate Zn(2+).

The protein belongs to the endoribonuclease YbeY family. It depends on Zn(2+) as a cofactor.

It localises to the cytoplasm. Its function is as follows. Single strand-specific metallo-endoribonuclease involved in late-stage 70S ribosome quality control and in maturation of the 3' terminus of the 16S rRNA. This chain is Endoribonuclease YbeY, found in Streptococcus thermophilus (strain CNRZ 1066).